The following is a 292-amino-acid chain: Bis(5'-nucleosyl)-tetraphosphatase, symmetrical (292 aa).

This sequence belongs to the Ap4A hydrolase family.

It carries out the reaction P(1),P(4)-bis(5'-adenosyl) tetraphosphate + H2O = 2 ADP + 2 H(+). Functionally, hydrolyzes diadenosine 5',5'''-P1,P4-tetraphosphate to yield ADP. This chain is Bis(5'-nucleosyl)-tetraphosphatase, symmetrical, found in Yersinia enterocolitica serotype O:8 / biotype 1B (strain NCTC 13174 / 8081).